A 416-amino-acid chain; its full sequence is Methylthioribose-1-phosphate isomerase (416 aa).

The active-site Proton donor is Asp280.

Belongs to the eIF-2B alpha/beta/delta subunits family. MtnA subfamily.

The protein localises to the cytoplasm. It localises to the nucleus. It carries out the reaction 5-(methylsulfanyl)-alpha-D-ribose 1-phosphate = 5-(methylsulfanyl)-D-ribulose 1-phosphate. Its pathway is amino-acid biosynthesis; L-methionine biosynthesis via salvage pathway; L-methionine from S-methyl-5-thio-alpha-D-ribose 1-phosphate: step 1/6. In terms of biological role, catalyzes the interconversion of methylthioribose-1-phosphate (MTR-1-P) into methylthioribulose-1-phosphate (MTRu-1-P). The sequence is that of Methylthioribose-1-phosphate isomerase from Candida albicans (strain SC5314 / ATCC MYA-2876) (Yeast).